Here is a 156-residue protein sequence, read N- to C-terminus: Small ribosomal subunit protein uS7 (156 aa).

The protein belongs to the universal ribosomal protein uS7 family. As to quaternary structure, part of the 30S ribosomal subunit. Contacts proteins S9 and S11.

In terms of biological role, one of the primary rRNA binding proteins, it binds directly to 16S rRNA where it nucleates assembly of the head domain of the 30S subunit. Is located at the subunit interface close to the decoding center, probably blocks exit of the E-site tRNA. This is Small ribosomal subunit protein uS7 from Macrococcus caseolyticus (strain JCSC5402) (Macrococcoides caseolyticum).